The primary structure comprises 527 residues: Bifunctional purine biosynthesis protein PurH (527 aa).

Positions 1–149 (MTADLLPVRR…KNFARVAVAT (149 aa)) constitute an MGS-like domain.

The protein belongs to the PurH family.

It carries out the reaction (6R)-10-formyltetrahydrofolate + 5-amino-1-(5-phospho-beta-D-ribosyl)imidazole-4-carboxamide = 5-formamido-1-(5-phospho-D-ribosyl)imidazole-4-carboxamide + (6S)-5,6,7,8-tetrahydrofolate. The enzyme catalyses IMP + H2O = 5-formamido-1-(5-phospho-D-ribosyl)imidazole-4-carboxamide. It participates in purine metabolism; IMP biosynthesis via de novo pathway; 5-formamido-1-(5-phospho-D-ribosyl)imidazole-4-carboxamide from 5-amino-1-(5-phospho-D-ribosyl)imidazole-4-carboxamide (10-formyl THF route): step 1/1. It functions in the pathway purine metabolism; IMP biosynthesis via de novo pathway; IMP from 5-formamido-1-(5-phospho-D-ribosyl)imidazole-4-carboxamide: step 1/1. This is Bifunctional purine biosynthesis protein PurH from Stenotrophomonas maltophilia (strain K279a).